The following is a 171-amino-acid chain: 3-hydroxydecanoyl-[acyl-carrier-protein] dehydratase (171 aa).

H70 is an active-site residue.

This sequence belongs to the thioester dehydratase family. FabA subfamily. In terms of assembly, homodimer.

It is found in the cytoplasm. The enzyme catalyses a (3R)-hydroxyacyl-[ACP] = a (2E)-enoyl-[ACP] + H2O. It carries out the reaction (3R)-hydroxydecanoyl-[ACP] = (2E)-decenoyl-[ACP] + H2O. The catalysed reaction is (2E)-decenoyl-[ACP] = (3Z)-decenoyl-[ACP]. Its pathway is lipid metabolism; fatty acid biosynthesis. Its function is as follows. Necessary for the introduction of cis unsaturation into fatty acids. Catalyzes the dehydration of (3R)-3-hydroxydecanoyl-ACP to E-(2)-decenoyl-ACP and then its isomerization to Z-(3)-decenoyl-ACP. Can catalyze the dehydratase reaction for beta-hydroxyacyl-ACPs with saturated chain lengths up to 16:0, being most active on intermediate chain length. The protein is 3-hydroxydecanoyl-[acyl-carrier-protein] dehydratase of Methylococcus capsulatus (strain ATCC 33009 / NCIMB 11132 / Bath).